Consider the following 322-residue polypeptide: Undecaprenyl-phosphate 4-deoxy-4-formamido-L-arabinose transferase (322 aa).

Over 1 to 235 (MFEIHPVKKV…TCLTTTPLRM (235 aa)) the chain is Cytoplasmic. A helical transmembrane segment spans residues 236–256 (LSLLGSIIAIGGFSIAVLLVI). The Periplasmic portion of the chain corresponds to 257–269 (LRLTFGPQWAAEG). Residues 270–290 (VFMLFAVLFTFIGAQFIGMGL) traverse the membrane as a helical segment. Topologically, residues 291-322 (LGEYIGRIYTDVRARPRYFVQQVIRPSSKENE) are cytoplasmic.

It belongs to the glycosyltransferase 2 family.

It is found in the cell inner membrane. It catalyses the reaction UDP-4-deoxy-4-formamido-beta-L-arabinose + di-trans,octa-cis-undecaprenyl phosphate = 4-deoxy-4-formamido-alpha-L-arabinopyranosyl di-trans,octa-cis-undecaprenyl phosphate + UDP. Its pathway is glycolipid biosynthesis; 4-amino-4-deoxy-alpha-L-arabinose undecaprenyl phosphate biosynthesis; 4-amino-4-deoxy-alpha-L-arabinose undecaprenyl phosphate from UDP-4-deoxy-4-formamido-beta-L-arabinose and undecaprenyl phosphate: step 1/2. It participates in bacterial outer membrane biogenesis; lipopolysaccharide biosynthesis. Catalyzes the transfer of 4-deoxy-4-formamido-L-arabinose from UDP to undecaprenyl phosphate. The modified arabinose is attached to lipid A and is required for resistance to polymyxin and cationic antimicrobial peptides. This Shigella dysenteriae serotype 1 (strain Sd197) protein is Undecaprenyl-phosphate 4-deoxy-4-formamido-L-arabinose transferase.